Reading from the N-terminus, the 85-residue chain is CRISPR-associated endoribonuclease Cas2 2 (85 aa).

D8 contributes to the Mg(2+) binding site.

Belongs to the CRISPR-associated endoribonuclease Cas2 protein family. In terms of assembly, homodimer, forms a heterotetramer with a Cas1 homodimer. Requires Mg(2+) as cofactor.

In terms of biological role, CRISPR (clustered regularly interspaced short palindromic repeat), is an adaptive immune system that provides protection against mobile genetic elements (viruses, transposable elements and conjugative plasmids). CRISPR clusters contain sequences complementary to antecedent mobile elements and target invading nucleic acids. CRISPR clusters are transcribed and processed into CRISPR RNA (crRNA). Functions as a ssRNA-specific endoribonuclease. Involved in the integration of spacer DNA into the CRISPR cassette. The protein is CRISPR-associated endoribonuclease Cas2 2 of Chloroflexus aurantiacus (strain ATCC 29366 / DSM 635 / J-10-fl).